A 1296-amino-acid chain; its full sequence is DNA-directed RNA polymerase subunit beta' (1296 aa).

Zn(2+) is bound by residues Cys60, Cys62, Cys75, and Cys78. The disordered stretch occupies residues 188-209; it reads GAKGDARRKVRESAEREMRQIR. Asp535, Asp537, and Asp539 together coordinate Mg(2+). The Zn(2+) site is built by Cys877, Cys954, Cys961, and Cys964.

This sequence belongs to the RNA polymerase beta' chain family. In terms of assembly, the RNAP catalytic core consists of 2 alpha, 1 beta, 1 beta' and 1 omega subunit. When a sigma factor is associated with the core the holoenzyme is formed, which can initiate transcription. Mg(2+) serves as cofactor. Zn(2+) is required as a cofactor.

It catalyses the reaction RNA(n) + a ribonucleoside 5'-triphosphate = RNA(n+1) + diphosphate. Functionally, DNA-dependent RNA polymerase catalyzes the transcription of DNA into RNA using the four ribonucleoside triphosphates as substrates. This chain is DNA-directed RNA polymerase subunit beta', found in Parafrankia sp. (strain EAN1pec).